Consider the following 167-residue polypeptide: 3-isopropylmalate dehydratase small subunit (167 aa).

Belongs to the LeuD family. LeuD type 2 subfamily. In terms of assembly, heterodimer of LeuC and LeuD.

The catalysed reaction is (2R,3S)-3-isopropylmalate = (2S)-2-isopropylmalate. Its pathway is amino-acid biosynthesis; L-leucine biosynthesis; L-leucine from 3-methyl-2-oxobutanoate: step 2/4. Functionally, catalyzes the isomerization between 2-isopropylmalate and 3-isopropylmalate, via the formation of 2-isopropylmaleate. This Nitratidesulfovibrio vulgaris (strain ATCC 29579 / DSM 644 / CCUG 34227 / NCIMB 8303 / VKM B-1760 / Hildenborough) (Desulfovibrio vulgaris) protein is 3-isopropylmalate dehydratase small subunit.